A 358-amino-acid chain; its full sequence is UDP-N-acetylglucosamine--N-acetylmuramyl-(pentapeptide) pyrophosphoryl-undecaprenol N-acetylglucosamine transferase (358 aa).

UDP-N-acetyl-alpha-D-glucosamine is bound by residues serine 197 and glutamine 288.

This sequence belongs to the glycosyltransferase 28 family. MurG subfamily.

Its subcellular location is the cell membrane. It catalyses the reaction Mur2Ac(oyl-L-Ala-gamma-D-Glu-L-Lys-D-Ala-D-Ala)-di-trans,octa-cis-undecaprenyl diphosphate + UDP-N-acetyl-alpha-D-glucosamine = beta-D-GlcNAc-(1-&gt;4)-Mur2Ac(oyl-L-Ala-gamma-D-Glu-L-Lys-D-Ala-D-Ala)-di-trans,octa-cis-undecaprenyl diphosphate + UDP + H(+). It functions in the pathway cell wall biogenesis; peptidoglycan biosynthesis. Cell wall formation. Catalyzes the transfer of a GlcNAc subunit on undecaprenyl-pyrophosphoryl-MurNAc-pentapeptide (lipid intermediate I) to form undecaprenyl-pyrophosphoryl-MurNAc-(pentapeptide)GlcNAc (lipid intermediate II). The chain is UDP-N-acetylglucosamine--N-acetylmuramyl-(pentapeptide) pyrophosphoryl-undecaprenol N-acetylglucosamine transferase from Streptococcus agalactiae serotype Ia (strain ATCC 27591 / A909 / CDC SS700).